Reading from the N-terminus, the 375-residue chain is Transcription factor E2F4 (375 aa).

Residues 12–81 (SRHEKSLGLL…KNSIQWKGVG (70 aa)) mediate DNA binding. Positions 39–61 (LKAAADTLAVRQKRRIYDITNVL) are leucine-zipper. The DEF box motif lies at 44–81 (DTLAVRQKRRIYDITNVLEGIGLIEKKSKNSIQWKGVG). Residues 82 to 177 (PGCNTREIAD…NTNGQKKFQI (96 aa)) form a dimerization region. Residues 197-300 (SSAPVVVPVP…PDPSTSFQPI (104 aa)) form a disordered region. The segment covering 220–270 (STPQRPALTPQNDIATSPAPTVPHSTISNAESQDCPTGQTFSMENTTSSRL) has biased composition (polar residues). Low complexity predominate over residues 280–296 (SSASLDNSNDSPDPSTS). Residues 299 to 375 (PIKSDLSDVL…CDLFDVPINL (77 aa)) form a transactivation region.

This sequence belongs to the E2F/DP family. Component of the drtf1/e2f transcription factor complex. Component of the EDM complex, at least composed of e2f4, e2f5, mcidas and tfdp1.

It localises to the nucleus. Transcription activator that binds DNA cooperatively with DP proteins through the E2 recognition site, 5'-TTTC[CG]CGC-3' found in the promoter region of a number of genes. Component of the EDM complex, a complex specifically required for multiciliate cell differentiation: the EDM complex binds and activate genes required for centriole biogenesis. Activates genes required for centriole assembly (plk4, cep152) and genes specifically required for motile cilia formation (foxj1). Also promotes the deuterosome pathway of centriole biogenesis by activating expression of deup1, but not its paralog cep63. This is Transcription factor E2F4 from Xenopus laevis (African clawed frog).